Reading from the N-terminus, the 105-residue chain is Cell division protein FtsB (105 aa).

Over methionine 1–lysine 3 the chain is Cytoplasmic. The helical transmembrane segment at leucine 4 to leucine 21 threads the bilayer. Residues glycine 22–glutamine 105 are Periplasmic-facing. Positions aspartate 28 to glycine 62 form a coiled coil.

It belongs to the FtsB family. Part of a complex composed of FtsB, FtsL and FtsQ.

It localises to the cell inner membrane. Functionally, essential cell division protein. May link together the upstream cell division proteins, which are predominantly cytoplasmic, with the downstream cell division proteins, which are predominantly periplasmic. This chain is Cell division protein FtsB, found in Sodalis glossinidius (strain morsitans).